Here is a 248-residue protein sequence, read N- to C-terminus: Tabinhibitin 10 (248 aa).

The first 22 residues, 1–22, serve as a signal peptide directing secretion; sequence MTLKRIFCAALALIVLQSVASA. The SCP domain maps to 66–208; it reads LQKTNWLRGV…NYKGAFHCSL (143 aa). A Cell attachment site motif is present at residues 221–223; that stretch reads RGD.

The protein belongs to the CRISP family. Expressed in salivary glands.

It is found in the secreted. In terms of biological role, inhibits platelet aggregation induced by all agonists tested (ADP, arachidonic acid, the thromboxane A2 analog U46619, thrombin, and snake venom snaclecs (TMVA that activates platelet through GPIB, and stejnulxin that specifically acts through GPVI (GP6))). May act by competing with fibrinogen for binding to glycoprotein IIb/IIIa (ITGA2B/ITGB3). This chain is Tabinhibitin 10, found in Tabanus yao (Horsefly).